Reading from the N-terminus, the 465-residue chain is MKVYNTLTRTKEEFVPLEEGKVKMYVCGPTVYNYIHIGNARPFIIFDTLRRYLEYRGYDVTYVQNFTDVDDKIINRSHEEGISPEEVAAKYIKEYFVDCDGLGIKRATVHPQVTDNIQQIIEFIKELEDKGYAYAVNGDVYFDTNKFEGYGKLSGQKQEDLEAGARIEVNDQKRHPMDFVLWKAKKEGEPGWDSPWGEGRPGWHIECSVMSKRYLGETIDIHAGGQDLTFPHHENEIAQSEARSGKTFSKYWMHNGYININDEKMSKSKGNFFTVRDISKLYDLEIVRFFMLSAHYRNPVNFSDEMLNQAKAGLERLYNTKEKLEFTLSNLVESPLTEKEVELVKELDDFRQKFIDAMDDDVNTADAVSVIFELAKLINSNVDENSSLEFAKKCLDEFNELTGVLNIVNKKKDTVLDKDIEELIQKRTDAKKNKEFQLADDIRQQLLDMGIVLEDTRQGVKWKRI.

Cys27 contributes to the Zn(2+) binding site. The 'HIGH' region signature appears at 29-39 (PTVYNYIHIGN). Residues Cys207, His232, and Glu236 each coordinate Zn(2+). The 'KMSKS' region motif lies at 264-268 (KMSKS). Lys267 lines the ATP pocket.

It belongs to the class-I aminoacyl-tRNA synthetase family. In terms of assembly, monomer. Requires Zn(2+) as cofactor.

The protein resides in the cytoplasm. It carries out the reaction tRNA(Cys) + L-cysteine + ATP = L-cysteinyl-tRNA(Cys) + AMP + diphosphate. The polypeptide is Cysteine--tRNA ligase (Clostridioides difficile (strain 630) (Peptoclostridium difficile)).